Consider the following 345-residue polypeptide: Selenide, water dikinase (345 aa).

Cys-16 is an active-site residue. ATP is bound by residues Lys-19 and 45–47 (TSE). Asp-48 contacts Mg(2+). ATP contacts are provided by residues Asp-65, Asp-88, and 136-138 (GHT). Residue Asp-88 participates in Mg(2+) binding. Asp-224 is a binding site for Mg(2+).

This sequence belongs to the selenophosphate synthase 1 family. Class I subfamily. Homodimer. Mg(2+) serves as cofactor.

The enzyme catalyses hydrogenselenide + ATP + H2O = selenophosphate + AMP + phosphate + 2 H(+). Its function is as follows. Synthesizes selenophosphate from selenide and ATP. In Aliarcobacter butzleri (strain RM4018) (Arcobacter butzleri), this protein is Selenide, water dikinase.